We begin with the raw amino-acid sequence, 372 residues long: 4-hydroxy-3-methylbut-2-en-1-yl diphosphate synthase (flavodoxin) (372 aa).

[4Fe-4S] cluster-binding residues include C270, C273, C305, and E312.

Belongs to the IspG family. [4Fe-4S] cluster is required as a cofactor.

It catalyses the reaction (2E)-4-hydroxy-3-methylbut-2-enyl diphosphate + oxidized [flavodoxin] + H2O + 2 H(+) = 2-C-methyl-D-erythritol 2,4-cyclic diphosphate + reduced [flavodoxin]. The protein operates within isoprenoid biosynthesis; isopentenyl diphosphate biosynthesis via DXP pathway; isopentenyl diphosphate from 1-deoxy-D-xylulose 5-phosphate: step 5/6. Its function is as follows. Converts 2C-methyl-D-erythritol 2,4-cyclodiphosphate (ME-2,4cPP) into 1-hydroxy-2-methyl-2-(E)-butenyl 4-diphosphate. This is 4-hydroxy-3-methylbut-2-en-1-yl diphosphate synthase (flavodoxin) from Vibrio parahaemolyticus serotype O3:K6 (strain RIMD 2210633).